Consider the following 385-residue polypeptide: MLQLREPQMVHKHLKLAVLGIVVIFTTYFIISSLSSPTSTHKTEYNSPKLQLAKELELNSNWKELGLNFQPNKKYSLPDESTLRQQLSYQFPYDESKPFPKNIWQTWKVGIDEKSFPKRYLKYQQTWEDKNPDYKHYVVPDKQCDLLIEQLYSQVPDVAKAYRIMPKSILKADFFRYLILFARGGVYTDIDTVGLKPVDEWISNSEMILEKKNRSGLVVGIEADPDRPDWADWYARRIQFCQWTIQSKRGHPMLRELIAKITDITLTRHKKGQLKKVLGKNEGGDIMNWTGPGIFTDTVFEYMNNILQSPEVFKNKKKWATIIDWKLFTGMEQPIAIDDVLVLPITSFSPDVNQMGAKDSHDPMAYAKHMFSGSWKDDGMPEMEQ.

At 1-15 the chain is on the cytoplasmic side; it reads MLQLREPQMVHKHLK. Residues 16–36 form a helical; Signal-anchor for type II membrane protein membrane-spanning segment; that stretch reads LAVLGIVVIFTTYFIISSLSS. Residues 37-385 lie on the Lumenal side of the membrane; sequence PTSTHKTEYN…KDDGMPEMEQ (349 aa). The short motif at 189-191 is the DXD motif element; it reads DID.

This sequence belongs to the glycosyltransferase 32 family. It depends on Mn(2+) as a cofactor.

It localises to the endoplasmic reticulum membrane. Its subcellular location is the golgi apparatus membrane. It catalyses the reaction Transfers an alpha-D-mannosyl residue from GDP-mannose into lipid-linked oligosaccharide, forming an alpha-(1-&gt;6)-D-mannosyl-D-mannose linkage.. Its function is as follows. Mannosyltransferase involved in outer chain elongation of asparagine-linked oligosaccharides of the type Man(9)GlcNAc(2). Adds the first alpha-1,6-mannose to the Man(8)GlcNAc(2) and Man(9)GlcNAc(2), but not Man(5)GlcNAc(2), endoplasmic reticulum intermediates. Represents the first enzymatic event required for synthesis of outer chain mannose linkages on yeast secretory proteins. N-glycan outer chain epitopes play a crucial role in the host-fungal interaction, virulence, and host immune response such as interleukin synthesis or phagocytosis by neutrophils. This Candida albicans (strain SC5314 / ATCC MYA-2876) (Yeast) protein is Initiation-specific alpha-1,6-mannosyltransferase.